A 130-amino-acid polypeptide reads, in one-letter code: Flagellar assembly factor FliW (130 aa).

Belongs to the FliW family. Interacts with translational regulator CsrA and flagellin(s).

It localises to the cytoplasm. Acts as an anti-CsrA protein, binds CsrA and prevents it from repressing translation of its target genes, one of which is flagellin. Binds to flagellin and participates in the assembly of the flagellum. In Borreliella burgdorferi (strain ATCC 35210 / DSM 4680 / CIP 102532 / B31) (Borrelia burgdorferi), this protein is Flagellar assembly factor FliW.